Consider the following 244-residue polypeptide: Orotidine 5'-phosphate decarboxylase (244 aa).

Substrate contacts are provided by residues aspartate 14, lysine 36, 63–72 (DLKFHDIPNT), threonine 127, arginine 188, glutamine 197, glycine 217, and arginine 218. Lysine 65 serves as the catalytic Proton donor.

Belongs to the OMP decarboxylase family. Type 1 subfamily. In terms of assembly, homodimer.

It catalyses the reaction orotidine 5'-phosphate + H(+) = UMP + CO2. The protein operates within pyrimidine metabolism; UMP biosynthesis via de novo pathway; UMP from orotate: step 2/2. Its function is as follows. Catalyzes the decarboxylation of orotidine 5'-monophosphate (OMP) to uridine 5'-monophosphate (UMP). In Syntrophotalea carbinolica (strain DSM 2380 / NBRC 103641 / GraBd1) (Pelobacter carbinolicus), this protein is Orotidine 5'-phosphate decarboxylase.